Here is a 51-residue protein sequence, read N- to C-terminus: Magnetosome protein Mms5 (51 aa).

Over 1-8 (MLSAKGVS) the chain is Lumenal. An LG region region spans residues 9–16 (LGLGLGLG). The helical transmembrane segment at 9-29 (LGLGLGLGAWGPVLLGVVGVA) threads the bilayer. The Cytoplasmic segment spans residues 30–51 (GALALYGYYKNRNAEPAAAEAV).

It belongs to the magnetosome MamD/Mms5 family. In terms of processing, may undergo N-terminal cleavage.

It is found in the magnetosome membrane. Its function is as follows. Might be involved in magnetite crystal growth. The protein is Magnetosome protein Mms5 of Magnetospirillum gryphiswaldense (strain DSM 6361 / JCM 21280 / NBRC 15271 / MSR-1).